The sequence spans 467 residues: ADP-dependent glucose/glucosamine kinase (467 aa).

Residues 10–467 form the ADPK domain; sequence RLWKRLYVNA…FVSEFGMRKR (458 aa). Residues Asp42, Glu96, Gly120, 120–121, His184, and Asp211 each bind D-glucose; that span reads GQ. Glu279 contributes to the Mg(2+) binding site. Asn305 contacts ADP. Glu308 contributes to the Mg(2+) binding site. Residues 352–353, Val440, and Gly450 each bind ADP; that span reads HT. Asp451 contacts D-glucose. Mg(2+) is bound at residue Asp451. Asp451 serves as the catalytic Proton acceptor.

It belongs to the ADP-dependent glucokinase family. Monomer. The cofactor is Mg(2+).

It is found in the cytoplasm. The catalysed reaction is D-glucose + ADP = D-glucose 6-phosphate + AMP + H(+). The enzyme catalyses D-glucosamine + ADP = D-glucosamine 6-phosphate + AMP + H(+). Its pathway is carbohydrate degradation; glycolysis. Its function is as follows. Catalyzes the ADP-dependent phosphorylation of D-glucose to D-glucose 6-phosphate and glucosamine to glucosamine 6-phosphate. Can also use CDP as the phosphoryl group donor and D-1,5-anhydroglucitol as the phosphoryl group acceptor. This is ADP-dependent glucose/glucosamine kinase from Thermococcus litoralis (strain ATCC 51850 / DSM 5473 / JCM 8560 / NS-C).